Consider the following 512-residue polypeptide: Ribonuclease Y (512 aa).

A helical membrane pass occupies residues 2–22; that stretch reads VGMYIIIPIVTFIIGGLLAWL. One can recognise a KH domain in the interval 202 to 262; it reads SITVFHIESD…VRREIARLAL (61 aa). In terms of domain architecture, HD spans 328 to 421; the sequence is LLQHARETAN…VQVCDAISGA (94 aa).

The protein belongs to the RNase Y family.

The protein resides in the cell membrane. Its function is as follows. Endoribonuclease that initiates mRNA decay. The chain is Ribonuclease Y from Parabacteroides distasonis (strain ATCC 8503 / DSM 20701 / CIP 104284 / JCM 5825 / NCTC 11152).